Reading from the N-terminus, the 511-residue chain is Maturase K (511 aa).

It belongs to the intron maturase 2 family. MatK subfamily.

It is found in the plastid. The protein resides in the chloroplast. Functionally, usually encoded in the trnK tRNA gene intron. Probably assists in splicing its own and other chloroplast group II introns. The polypeptide is Maturase K (Melica altissima (Siberian melic grass)).